A 756-amino-acid chain; its full sequence is Deoxynucleotidyltransferase terminal-interacting protein 2 (756 aa).

Positions 1-99 (MVVTRSARAK…AESNYSVSEH (99 aa)) are disordered. A compositionally biased stretch (low complexity) spans 9–21 (AKASIQAASAESS). Phosphoserine is present on serine 21. 2 stretches are compositionally biased toward polar residues: residues 35–55 (PESS…TGKQ) and 80–96 (EPST…NYSV). At serine 117 the chain carries Phosphoserine. A Phosphothreonine modification is found at threonine 129. Phosphoserine occurs at positions 141, 145, 148, 184, and 194. The interval 156–261 (PTEKTTGARR…LSEINKPNFY (106 aa)) is disordered. Over residues 201–211 (RRTRSMQRKLK) the composition is skewed to basic residues. Residues lysine 217 and lysine 220 each participate in a glycyl lysine isopeptide (Lys-Gly) (interchain with G-Cter in SUMO2) cross-link. Threonine 232 carries the phosphothreonine modification. Residues serine 239, serine 251, and serine 253 each carry the phosphoserine modification. A compositionally biased stretch (polar residues) spans 242–256 (RQTSHLQARSLSEIN). Glycyl lysine isopeptide (Lys-Gly) (interchain with G-Cter in SUMO2) cross-links involve residues lysine 257, lysine 316, and lysine 321. Phosphoserine occurs at positions 324 and 330. Lysine 345 is covalently cross-linked (Glycyl lysine isopeptide (Lys-Gly) (interchain with G-Cter in SUMO2)). A Phosphoserine modification is found at serine 381. Lysine 384 is covalently cross-linked (Glycyl lysine isopeptide (Lys-Gly) (interchain with G-Cter in SUMO2)). A phosphoserine mark is found at serine 434 and serine 512. Residues 505–542 (LEEEDKASEVAIEEEKEEEEDEKSEEDSSDHDENEDEF) adopt a coiled-coil conformation. The interval 510 to 547 (KASEVAIEEEKEEEEDEKSEEDSSDHDENEDEFSDEED) is disordered. The tract at residues 548–605 (FLNSTKAKLLKLTSSSIDPGLSIKQLGGLYINFNADKLQSNKRTLTQIKEKKKNELLQ) is tdBR region; mediates interaction with DNTT. Residue lysine 558 forms a Glycyl lysine isopeptide (Lys-Gly) (interchain with G-Cter in SUMO2) linkage. The residue at position 569 (serine 569) is a Phosphoserine. Glycyl lysine isopeptide (Lys-Gly) (interchain with G-Cter in SUMO2) cross-links involve residues lysine 584 and lysine 606. At threonine 610 the chain carries Phosphothreonine. Residues lysine 626, lysine 649, lysine 658, lysine 686, and lysine 731 each participate in a glycyl lysine isopeptide (Lys-Gly) (interchain with G-Cter in SUMO2) cross-link.

Forms a ternary complex with DNTT and core histone; interaction with PCNA releases DNTT and H2A/H2B histones from this ternary complex. Interacts with ESR1, ESR2, PPARG and RXRA. Part of the small subunit (SSU) processome, composed of more than 70 proteins and the RNA chaperone small nucleolar RNA (snoRNA) U3. In terms of tissue distribution, widely expressed with higher levels in testis.

Its subcellular location is the nucleus. The protein resides in the nucleolus. Functionally, regulates the transcriptional activity of DNTT and ESR1. May function as a chromatin remodeling protein. Part of the small subunit (SSU) processome, first precursor of the small eukaryotic ribosomal subunit. During the assembly of the SSU processome in the nucleolus, many ribosome biogenesis factors, an RNA chaperone and ribosomal proteins associate with the nascent pre-rRNA and work in concert to generate RNA folding, modifications, rearrangements and cleavage as well as targeted degradation of pre-ribosomal RNA by the RNA exosome. This is Deoxynucleotidyltransferase terminal-interacting protein 2 from Homo sapiens (Human).